The following is a 63-amino-acid chain: Large ribosomal subunit protein uL30 (63 aa).

Belongs to the universal ribosomal protein uL30 family. As to quaternary structure, part of the 50S ribosomal subunit.

This is Large ribosomal subunit protein uL30 from Rickettsia akari (strain Hartford).